Here is a 248-residue protein sequence, read N- to C-terminus: Probable phosphatase VFMJ11_A0899 (248 aa).

Zn(2+)-binding residues include His-8, His-10, His-16, His-41, Glu-74, His-101, His-131, Asp-193, and His-195.

It belongs to the PHP family. Requires Zn(2+) as cofactor.

The sequence is that of Probable phosphatase VFMJ11_A0899 from Aliivibrio fischeri (strain MJ11) (Vibrio fischeri).